We begin with the raw amino-acid sequence, 389 residues long: bZIP transcription factor 68 (389 aa).

A compositionally biased stretch (basic and acidic residues) spans 1 to 16 (MGSSEMEKSGKEKEPK). 5 disordered regions span residues 1–42 (MGSS…VSAG), 124–154 (MAEA…KRSK), 170–236 (AGKN…NLPV), 285–318 (QPWL…RKQA), and 356–389 (SSLK…QDVA). The segment covering 19 to 32 (PPSTSSSAPATVVS) has biased composition (low complexity). Residues 137-149 (GDGKPSDGKEKLP) show a composition bias toward basic and acidic residues. K154 is covalently cross-linked (Glycyl lysine isopeptide (Lys-Gly) (interchain with G-Cter in ubiquitin)). Residues 170-205 (AGKNSGASANGACSKSAESGSDGSSDGSDANSQNDS) are compositionally biased toward low complexity. Composition is skewed to basic and acidic residues over residues 206-215 (GSRHNGKDGE) and 304-318 (SNRE…RKQA). A bZIP domain is found at 295–358 (EIKRQRRKQS…EELLAENSSL (64 aa)). Residues 297–316 (KRQRRKQSNRESARRSRLRK) are basic motif. Residues 323–358 (LAQRAEVLNGENSSLRAEINKLKSQYEELLAENSSL) are leucine-zipper. A compositionally biased stretch (polar residues) spans 356 to 366 (SSLKNKFSSAP). Residues 372–389 (DLDKNEQEPQRSTRQDVA) are compositionally biased toward basic and acidic residues.

The protein belongs to the bZIP family. In terms of assembly, monomer, homodimer and heterodimers with GBF1/BZIP41, GBF2/BZIP54 and GBF3/BZIP55. Heterodimers with BZIP16. Interacts with GIP1.

Its subcellular location is the nucleus. Transcriptional activator that binds to the G-box motif (5'-CACGTG-3') and other cis-acting elements with 5'-ACGT-3' core, such as Hex, C-box and as-1 motifs. Possesses high binding affinity to G-box, much lower affinity to Hex and C-box, and little affinity to as-1 element. G-box and G-box-like motifs are cis-acting elements defined in promoters of certain plant genes which are regulated by such diverse stimuli as light-induction or hormone control. Binds to the G-box motif 5'-CACGTG-3' of LHCB2.4 (At3g27690) promoter. May act as transcriptional activator in light-regulated expression of LHCB2.4. Probably binds DNA as monomer. DNA-binding activity is redox-dependent. This chain is bZIP transcription factor 68, found in Arabidopsis thaliana (Mouse-ear cress).